The sequence spans 2517 residues: Non-reducing polyketide synthase pkbA (2517 aa).

The tract at residues 59–250 (LERVAGPAEK…KRFDLRGRFH (192 aa)) is N-terminal acylcarrier protein transacylase domain (SAT). A Ketosynthase family 3 (KS3) domain is found at 380 to 775 (SEPIAIIGMG…SANTVSSLKE (396 aa)). Catalysis depends on for beta-ketoacyl synthase activity residues cysteine 547, histidine 682, and histidine 721. Residues 849 to 1158 (AFGGQVARSV…TGTAALADAT (310 aa)) form a malonyl-CoA:ACP transacylase (MAT) domain region. The active-site For acyl/malonyl transferase activity is serine 935. An N-terminal hotdog fold region spans residues 1221-1353 (EEFLTFVKYK…GTVVLRENDT (133 aa)). The region spanning 1221–1530 (EEFLTFVKYK…FTRVQISSLG (310 aa)) is the PKS/mFAS DH domain. The tract at residues 1251–1525 (FVKGHAVLAE…ILGAHFTRVQ (275 aa)) is product template (PT) domain. Histidine 1255 acts as the Proton acceptor; for dehydratase activity in catalysis. Residues 1379 to 1530 (DCHILQGPVV…FTRVQISSLG (152 aa)) form a C-terminal hotdog fold region. The Proton donor; for dehydratase activity role is filled by aspartate 1437. The region spanning 1574 to 1651 (RPTLEISEKL…SISKCLASYL (78 aa)) is the Carrier 1 domain. Serine 1611 is subject to O-(pantetheine 4'-phosphoryl)serine. The interval 1659–1684 (QPEDLADADSVESDSDMPTGAVTSGI) is disordered. The span at 1662–1673 (DLADADSVESDS) shows a compositional bias: acidic residues. The region spanning 1685–1761 (TTPDDAVSRL…DLIALVPALN (77 aa)) is the Carrier 2 domain. Residue serine 1721 is modified to O-(pantetheine 4'-phosphoryl)serine. Positions 1976–2075 (LELGGGTGGT…IHRMLRPDGF (100 aa)) are methyltransferase (CMeT) domain. Positions 2200–2514 (LMIHGGGHIM…RGYDFLKEEV (315 aa)) are thioesterase (TE) domain.

Pantetheine 4'-phosphate is required as a cofactor.

It catalyses the reaction 3 malonyl-CoA + acetyl-CoA + S-adenosyl-L-methionine + H(+) = 3-methylorsellinate + S-adenosyl-L-homocysteine + 3 CO2 + 4 CoA. It functions in the pathway phytotoxin biosynthesis. Functionally, non-reducing polyketide synthase; part of the gene cluster that mediates the biosynthesis of cichorine, a phytotoxin active against knapweed, corn, and soybeans. The first step in the pathway is performed by the non-reducing polyketide synthase pkbA that condenses one acetyl-CoA starter unit with 3 malonyl-CoA units. PkbA also catalyzes one methylation step to produce 3-methylorsellinate. The nonribosomal peptide synthase-like protein cicB, the cytochrome P450 monooxygenase cicH and the O-methyltransferase cicE are involved in the conversion of 3-methylorsellinate into nidulol. CicB converts 3-methylorsellinate to a yet unidentified intermediate, cicH may play a ring-closing role for cichorine and cicE is plausibly responsible for the methylation of one of the phenol groups. The oxidoreductase cicC acts downstream with still unidentified enzymes to further convert nidulol into cichorin. This Emericella nidulans (strain FGSC A4 / ATCC 38163 / CBS 112.46 / NRRL 194 / M139) (Aspergillus nidulans) protein is Non-reducing polyketide synthase pkbA.